Consider the following 261-residue polypeptide: DNA repair protein RecO (261 aa).

This sequence belongs to the RecO family.

Functionally, involved in DNA repair and RecF pathway recombination. The protein is DNA repair protein RecO of Chlorobium phaeobacteroides (strain DSM 266 / SMG 266 / 2430).